The primary structure comprises 210 residues: Redox-sensing transcriptional repressor Rex (210 aa).

Positions 16–55 (IYSRFLKRLDKKGITTVSSGDIAEGVGVSPAQVRKDLAYF) form a DNA-binding region, H-T-H motif. 90–95 (GAGNLG) is a binding site for NAD(+).

The protein belongs to the transcriptional regulatory Rex family. In terms of assembly, homodimer.

Its subcellular location is the cytoplasm. Its function is as follows. Modulates transcription in response to changes in cellular NADH/NAD(+) redox state. The protein is Redox-sensing transcriptional repressor Rex of Desulforamulus reducens (strain ATCC BAA-1160 / DSM 100696 / MI-1) (Desulfotomaculum reducens).